The following is a 404-amino-acid chain: Glycosylated lysosomal membrane protein (404 aa).

Residues 1–35 (MRGSVERGWGWGHCASSPLLLWTLLLFAAPFGLLG) form the signal peptide. Topologically, residues 36–371 (EKTRQLSLEV…GRLVPTSPGH (336 aa)) are lumenal. Asparagine 65, asparagine 134, asparagine 159, asparagine 186, and asparagine 229 each carry an N-linked (GlcNAc...) asparagine glycan. Residues 372–392 (HGSALGAPGLMLLGGGLVLLL) form a helical membrane-spanning segment. The Cytoplasmic portion of the chain corresponds to 393–404 (HHRKYSEYQSIN). The Lysosomal targeting motif motif lies at 400–404 (YQSIN).

This sequence belongs to the GLMP family. Interacts (via lumenal domain) with lysosomal protein MFSD1; the interaction starts while both proteins are still in the endoplasmic reticulum and is required for stabilization of MFSD1 in lysosomes but has no direct effect on its targeting to lysosomes or transporter activity. In terms of processing, highly N-glycosylated. N-glycosylation is essential for GLMP stability and for MFSD1 lysosomal localization.

It localises to the lysosome membrane. Required to protect lysosomal transporter MFSD1 from lysosomal proteolysis and for MFSD1 lysosomal localization. The chain is Glycosylated lysosomal membrane protein from Pongo abelii (Sumatran orangutan).